The following is a 689-amino-acid chain: MNNLLIEIGAEEIPAGYILPALTSFCDRVTAALTGARINHGKTAVFGTPRRLALMVEDVQACQAPQKTTLMGPPQRIGFDNEGKPTLAGVKFAEKAGIVPEEIIITDNGKGPYLSAVIEESCLLTEAILEGVLPELIQAIPFPKSMHWGDLDVTFARPIVSLTALLGKTVLNFKIGNIASASFVFGHSFMAPERFELESADAYLDTLRKAGVVADIGERRTILKESIKAAADKACATIIEDEELVDIVNNLVEYPYPVVGHFDEVFLELPDEVLITAMREHQKYFALADTAGKLMPCFIAVNNTRARDMDVVAKGHGKVIRARLADAQFFYHVDLESTLDDFVEKLKAVTFQASLGSMYEKTGRLVVLVEFLAGLVNADQELQKKLMRAARLSKADLVSQMVIEFTKLQGIIGRVYAQKGGEDPEVAMAIEEHYRPVYSGGDLPRTDTGKILAIADKTDTLCGCFSANLIPTGASDPYALRRQSIGILQIMLEAGFDFSLRALVRRGVAQYQTDPDKKNEISTQILEFLKGRMTNMLVDQGFSREAVNAALSVSFYNVPDAFLRIKALDILRQEPDFEPLSTAFKRVVNILKKAGGDAKTRVNVNLFNCDAEKALHQACGEVTERVDTCIKAGDYGAALKEISTLRPHVDRLFEDVMVMDDDVALRINRMALLSSVAALFRNIADFSQI.

The protein belongs to the class-II aminoacyl-tRNA synthetase family. Tetramer of two alpha and two beta subunits.

The protein resides in the cytoplasm. It carries out the reaction tRNA(Gly) + glycine + ATP = glycyl-tRNA(Gly) + AMP + diphosphate. The polypeptide is Glycine--tRNA ligase beta subunit (Desulforapulum autotrophicum (strain ATCC 43914 / DSM 3382 / VKM B-1955 / HRM2) (Desulfobacterium autotrophicum)).